The primary structure comprises 302 residues: Arginase (302 aa).

Residues His-103, Asp-126, His-128, and Asp-130 each contribute to the Mn(2+) site. Residues 128–132 (HGDLN), 139–141 (SGN), and Asp-180 contribute to the substrate site. Positions 229 and 231 each coordinate Mn(2+). Thr-243 and Glu-274 together coordinate substrate.

The protein belongs to the arginase family. Mn(2+) is required as a cofactor.

The enzyme catalyses L-arginine + H2O = urea + L-ornithine. The protein operates within nitrogen metabolism; urea cycle; L-ornithine and urea from L-arginine: step 1/1. The protein is Arginase (arg) of Staphylococcus aureus (strain MSSA476).